Consider the following 85-residue polypeptide: UPF0386 protein TM1040_0419 (85 aa).

The interval 62–85 (SKSSRPYQISEKGRRSVRAQLDNR) is disordered.

Belongs to the UPF0386 family.

This is UPF0386 protein TM1040_0419 from Ruegeria sp. (strain TM1040) (Silicibacter sp.).